Consider the following 718-residue polypeptide: Polyribonucleotide nucleotidyltransferase (718 aa).

Residues Asp-497 and Asp-503 each contribute to the Mg(2+) site. A KH domain is found at 564 to 623 (PRLLTMRIDPDMIGLVIGPGGKTVKSITEQTKTKIDIDDDGTVTISASEAEQAERAKQLI). The 69-residue stretch at 633-701 (GEVYVGRVTR…NKGRLNLTRL (69 aa)) folds into the S1 motif domain.

Belongs to the polyribonucleotide nucleotidyltransferase family. Mg(2+) serves as cofactor.

It localises to the cytoplasm. It catalyses the reaction RNA(n+1) + phosphate = RNA(n) + a ribonucleoside 5'-diphosphate. Involved in mRNA degradation. Catalyzes the phosphorolysis of single-stranded polyribonucleotides processively in the 3'- to 5'-direction. This is Polyribonucleotide nucleotidyltransferase from Gloeothece citriformis (strain PCC 7424) (Cyanothece sp. (strain PCC 7424)).